The following is a 1048-amino-acid chain: Nonsense-mediated mRNA decay protein 5 (1048 aa).

The Importin N-terminal domain occupies 24–104; sequence AETHLKNASK…KDMLIKTMVS (81 aa). Phosphoserine is present on S977.

In terms of assembly, GTP-bound Ran dissociates the isolated NMD5/TFIIS complex.

It localises to the nucleus. It is found in the cytoplasm. Its function is as follows. Active in protein import into the nucleus. Its major import substrate is transcription elongation factor TFIIS. The sequence is that of Nonsense-mediated mRNA decay protein 5 (NMD5) from Saccharomyces cerevisiae (strain ATCC 204508 / S288c) (Baker's yeast).